Consider the following 375-residue polypeptide: Probable pectin lyase D (375 aa).

Residues 1–19 form the signal peptide; it reads MKYAAVLTTVAALASRALG. Disulfide bonds link Cys-82-Cys-101 and Cys-91-Cys-225. N-linked (GlcNAc...) asparagine glycosylation is present at Asn-128. Arg-255 is a catalytic residue. Cys-321 and Cys-329 are disulfide-bonded.

It belongs to the polysaccharide lyase 1 family.

It is found in the secreted. The enzyme catalyses Eliminative cleavage of (1-&gt;4)-alpha-D-galacturonan methyl ester to give oligosaccharides with 4-deoxy-6-O-methyl-alpha-D-galact-4-enuronosyl groups at their non-reducing ends.. In terms of biological role, pectinolytic enzymes consist of four classes of enzymes: pectin lyase, polygalacturonase, pectin methylesterase and rhamnogalacturonase. Among pectinolytic enzymes, pectin lyase is the most important in depolymerization of pectin, since it cleaves internal glycosidic bonds of highly methylated pectins. The polypeptide is Probable pectin lyase D (pelD) (Aspergillus flavus (strain ATCC 200026 / FGSC A1120 / IAM 13836 / NRRL 3357 / JCM 12722 / SRRC 167)).